The following is a 42-amino-acid chain: Phospholipase A1 (42 aa).

Belongs to the AB hydrolase superfamily. Lipase family. Post-translationally, contains six disulfide bonds. In terms of tissue distribution, expressed by the venom gland.

It is found in the secreted. It carries out the reaction a 1,2-diacyl-sn-glycero-3-phosphocholine + H2O = a 2-acyl-sn-glycero-3-phosphocholine + a fatty acid + H(+). Functionally, catalyzes the hydrolysis of phosphatidylcholine with phospholipase A1 activity. May act as an allergen and induce hemolytic activity. The chain is Phospholipase A1 from Polistes gallicus (Paper wasp).